A 495-amino-acid chain; its full sequence is Nuclear receptor subfamily 6 group A member 1 (495 aa).

The disordered stretch occupies residues 1-34; that stretch reads MERDERPPSGGGGGGGSAGFLEPPAALPPPPRNG. Gly residues predominate over residues 9–18; sequence SGGGGGGGSA. A DNA-binding region (nuclear receptor) is located at residues 72 to 147; the sequence is QRTCLICGDR…MGMNRKAIRE (76 aa). Zn(2+)-binding residues include C75, C78, C92, C95, C111, C117, C127, and C130. NR C4-type zinc fingers lie at residues 75 to 95 and 111 to 135; these read CLIC…CEGC and CSRD…LLKC. Disordered stretches follow at residues 145-165 and 177-214; these read IRED…QISE and FEEE…LSSS. Basic and acidic residues predominate over residues 180-192; that stretch reads EANHWSNHGDSDH. Residues 187-268 are sufficient for interaction with UIMC1; it reads HGDSDHSSPG…RSLDPQSYSL (82 aa). Positions 202–214 are enriched in low complexity; that stretch reads SNQPSPGSTLSSS. The region spanning 264 to 495 is the NR LBD domain; it reads QSYSLIHQLM…HSCKTSTVKE (232 aa).

This sequence belongs to the nuclear hormone receptor family. NR6 subfamily. In terms of assembly, homodimer. Interacts with UIMC1. In terms of tissue distribution, expressed in the germ cells of both the adult testis and ovary, being most abundant in spermatids.

Its subcellular location is the nucleus. Orphan nuclear receptor that binds to a response element containing the sequence 5'-TCAAGGTCA-3'. Acts as a regulator of embryonic stem cell pluripotency by mediating repression of POU5F1/OCT4: binds to the DR0 element within the POU5F1/OCT4 promoter and inhibits POU5F1/OCT4 expression during embryonic stem cell differentiation. Required to restrict POU5F1/OCT4 expression to the germ cell lineage. Involved in the regulation of gene expression in germ cell development during gametogenesis. The sequence is that of Nuclear receptor subfamily 6 group A member 1 (Nr6a1) from Mus musculus (Mouse).